Consider the following 575-residue polypeptide: MLAHLNQVTRIPPCPPFSGREARLKFHFFSWSTFMLSWPNNATLREIRTRAATNLTHHPHLVDTLYHASPQTPFLTRSGALYRFVTCCNCTLPNISIQQCKAGDRPGDLEIILQSNGGGRPASFQFPSSPTGSLLRCIVAASLLPEVSVGHQELSPLRSRSQGGQTDVRSGPDPARRLVALLRREDGAPKDPPLGPFGHPRGPGPAKSEDEESERRDAPPPPLDSSFQASRLVPVGPGFRLLVFNTNRVINTKLVCSEPLVKMRVCNVPRLINNFVARKYVVKETAFTVSLFFTDGVGANLAINVNISGTYLSFLLAMTSLRCFLPVEAIYPAAVSNWNSTLDLHGLENQSLVRENRSGVFWTTNFPSVVSCRDGLNVSWFKAATATISRVHGQTLEQHLIREITPIVTHREAKISRIKNRLFTLLELRNRSQIQVLHKRFLEGLLDCASLLRLDPSCINRIASEGLFDFSKRSIAHSKNRHECALLGHRHSANVTKLVVNERKTRLDILGRNANFLTRCKHQVNLRQSPIFLTLLRHIRRRLGLGRASVKREITLLLAHLRKKTAPIHCRDAQV.

2 disordered regions span residues Glu-153 to Pro-174 and Asp-186 to Gln-228. A compositionally biased stretch (polar residues) spans Arg-158–Val-168.

This sequence belongs to the herpesviridae UL87 family.

DNA-binding protein that is required for viral late gene expression. Selectively recognizes late promoters by binding to a non-canonical TATA box element (TATT). Part of the viral pre-initiation complex (vPIC) that is responsible for the expression of vPIC-dependent late genes. vPIC is composed of at least BcRF1 that binds the viral TATT box, BDLF3.5, BDLF4, BFRF2, BGLF3, BGLF4 and BVLF1. This chain is Late gene expression regulator BcRF1, found in Homo sapiens (Human).